A 627-amino-acid chain; its full sequence is Glycerophosphodiester phosphodiesterase domain-containing protein 4 (627 aa).

At 1-17 (MLLFLWIETSNEYFNFD) the chain is on the cytoplasmic side. The chain crosses the membrane as a helical span at residues 18 to 38 (WVIFLGTGYWFYWSIFILSLA). Glycine 39 is a topological domain (extracellular). Residues 40-60 (ILTAYSSLLLLLGLLLLWEGI) form a helical membrane-spanning segment. At 61–69 (ELYLHLCHK) the chain is on the cytoplasmic side. The chain crosses the membrane as a helical span at residues 70–90 (ILILLVILPCVILMFIICKFW). Over 91 to 107 (KERWLVAGLSLQIFAPY) the chain is Extracellular. Residues 108–128 (VHLVSITVMVILFWPVAIYVA) form a helical membrane-spanning segment. At 129–162 (RLEREVRMRRYRMTHSEKKRLKKCNVIARLRGLQ) the chain is on the cytoplasmic side. Residues 163-183 (VAVGLPFLLIFLSLCLMPLGI) form a helical membrane-spanning segment. Residues 184-468 (YSPCIQEKEN…PHFFMTPKFY (285 aa)) are Extracellular-facing. In terms of domain architecture, GP-PDE spans 198 to 457 (PTLFGHRGAP…DNIGLLSQLN (260 aa)). The a divalent metal cation site is built by glutamate 230, aspartate 232, and histidine 245. Asparagine 308 and asparagine 397 each carry an N-linked (GlcNAc...) asparagine glycan. A helical membrane pass occupies residues 469-489 (MFIWLLVDIISVLFIVAIFCF). Residues 490 to 627 (HWRRETIKEK…TMPSVEVPYP (138 aa)) lie on the Cytoplasmic side of the membrane.

It belongs to the glycerophosphoryl diester phosphodiesterase family.

It is found in the membrane. This Macaca fascicularis (Crab-eating macaque) protein is Glycerophosphodiester phosphodiesterase domain-containing protein 4 (GDPD4).